Consider the following 454-residue polypeptide: MTLPLHVVILAAGEGKRMRSSLPKVLQPLAGQPMLAHVIATARQLQPAAIHIVYGHGSDQVQAAFADQSDLQWAAQREQLGTGHAVQQAMPAIPDAARVLVLYGDVPLIRSESLLQLLHAPGRMAVLVAELANPTGYGRILRDAEGKVAAIVEQKDANDEQRRIRTINTGILTAESTALRRWLGGLSNDNAQGEFYLTDVFASAAADFTPADMVHVADPQDVEGANDPWQLAQLERAWQLRAARALSLQGVRMADPARVEQRGSVQVGRDVQLDIDVILEGEVTLGDDVVIGPFVRLRDVTLGAGTQVRAHSDLEGVITEGAVQIGPFARLRPGTVLADGVHIGNFVETKKVTMGVDSKANHLTYLGDAVIGSKVNIGAGTITCNYDGVNKSQTTIGDGAFVGSNSALVAPIEIGANSTIGAGSVVTRDAPAGQLTVTRARQTVIEGWERPTKK.

The segment at 1 to 228 (MTLPLHVVIL…PQDVEGANDP (228 aa)) is pyrophosphorylase. Residues 10-13 (LAAG), lysine 24, glutamine 76, 81-82 (GT), 103-105 (YGD), glycine 138, glutamate 153, asparagine 168, and asparagine 226 each bind UDP-N-acetyl-alpha-D-glucosamine. Residue aspartate 105 coordinates Mg(2+). Asparagine 226 provides a ligand contact to Mg(2+). The interval 229–249 (WQLAQLERAWQLRAARALSLQ) is linker. Positions 250–454 (GVRMADPARV…IEGWERPTKK (205 aa)) are N-acetyltransferase. Positions 332 and 350 each coordinate UDP-N-acetyl-alpha-D-glucosamine. Histidine 362 (proton acceptor) is an active-site residue. UDP-N-acetyl-alpha-D-glucosamine contacts are provided by tyrosine 365 and asparagine 376. Acetyl-CoA contacts are provided by residues alanine 379, 385–386 (NY), serine 404, alanine 422, and arginine 439.

In the N-terminal section; belongs to the N-acetylglucosamine-1-phosphate uridyltransferase family. The protein in the C-terminal section; belongs to the transferase hexapeptide repeat family. Homotrimer. The cofactor is Mg(2+).

Its subcellular location is the cytoplasm. The enzyme catalyses alpha-D-glucosamine 1-phosphate + acetyl-CoA = N-acetyl-alpha-D-glucosamine 1-phosphate + CoA + H(+). It catalyses the reaction N-acetyl-alpha-D-glucosamine 1-phosphate + UTP + H(+) = UDP-N-acetyl-alpha-D-glucosamine + diphosphate. It functions in the pathway nucleotide-sugar biosynthesis; UDP-N-acetyl-alpha-D-glucosamine biosynthesis; N-acetyl-alpha-D-glucosamine 1-phosphate from alpha-D-glucosamine 6-phosphate (route II): step 2/2. It participates in nucleotide-sugar biosynthesis; UDP-N-acetyl-alpha-D-glucosamine biosynthesis; UDP-N-acetyl-alpha-D-glucosamine from N-acetyl-alpha-D-glucosamine 1-phosphate: step 1/1. Its pathway is bacterial outer membrane biogenesis; LPS lipid A biosynthesis. In terms of biological role, catalyzes the last two sequential reactions in the de novo biosynthetic pathway for UDP-N-acetylglucosamine (UDP-GlcNAc). The C-terminal domain catalyzes the transfer of acetyl group from acetyl coenzyme A to glucosamine-1-phosphate (GlcN-1-P) to produce N-acetylglucosamine-1-phosphate (GlcNAc-1-P), which is converted into UDP-GlcNAc by the transfer of uridine 5-monophosphate (from uridine 5-triphosphate), a reaction catalyzed by the N-terminal domain. The sequence is that of Bifunctional protein GlmU from Xanthomonas oryzae pv. oryzae (strain MAFF 311018).